The following is a 301-amino-acid chain: Protein p34 (301 aa).

Helical transmembrane passes span 15-35 (YLSVTTALIILSIKLYAWVVT), 40-60 (ILAALIDSMLDITSSFINLIA), 83-103 (TIFSQSIFFFASAFFVGFSSV), 120-140 (TVMYVCIFLTIILVFYQTYVI), and 171-191 (LSDYFWFVDPLFGVVISLYIF).

The protein belongs to the cation diffusion facilitator (CDF) transporter (TC 2.A.4) family.

The protein resides in the cell membrane. This Rickettsia rickettsii (strain Sheila Smith) protein is Protein p34 (p34).